A 218-amino-acid chain; its full sequence is Small ribosomal subunit protein uS3c (218 aa).

Positions V47–E118 constitute a KH type-2 domain.

This sequence belongs to the universal ribosomal protein uS3 family. Part of the 30S ribosomal subunit.

The protein localises to the plastid. It localises to the chloroplast. In Anthoceros angustus (Hornwort), this protein is Small ribosomal subunit protein uS3c (rps3).